The sequence spans 211 residues: Imidazole glycerol phosphate synthase subunit HisH (211 aa).

Positions 3–211 (VVAVIDYEMG…VSQVREKIAA (209 aa)) constitute a Glutamine amidotransferase type-1 domain. Cys81 (nucleophile) is an active-site residue. Catalysis depends on residues His186 and Glu188.

In terms of assembly, heterodimer of HisH and HisF.

The protein resides in the cytoplasm. The catalysed reaction is 5-[(5-phospho-1-deoxy-D-ribulos-1-ylimino)methylamino]-1-(5-phospho-beta-D-ribosyl)imidazole-4-carboxamide + L-glutamine = D-erythro-1-(imidazol-4-yl)glycerol 3-phosphate + 5-amino-1-(5-phospho-beta-D-ribosyl)imidazole-4-carboxamide + L-glutamate + H(+). It carries out the reaction L-glutamine + H2O = L-glutamate + NH4(+). Its pathway is amino-acid biosynthesis; L-histidine biosynthesis; L-histidine from 5-phospho-alpha-D-ribose 1-diphosphate: step 5/9. IGPS catalyzes the conversion of PRFAR and glutamine to IGP, AICAR and glutamate. The HisH subunit catalyzes the hydrolysis of glutamine to glutamate and ammonia as part of the synthesis of IGP and AICAR. The resulting ammonia molecule is channeled to the active site of HisF. The polypeptide is Imidazole glycerol phosphate synthase subunit HisH (Nostoc sp. (strain PCC 7120 / SAG 25.82 / UTEX 2576)).